Consider the following 985-residue polypeptide: Alpha-glucosidase (985 aa).

The N-terminal stretch at 1–25 is a signal peptide; the sequence is MAGLKSFLASSWLLPVACGASQSIV. N126, N145, N220, N255, N349, and N424 each carry an N-linked (GlcNAc...) asparagine glycan. Catalysis depends on D492, which acts as the Nucleophile. The active site involves E495. N-linked (GlcNAc...) asparagine glycans are attached at residues N508, N536, N539, N602, and N624. The active-site Proton donor is the D660. 5 N-linked (GlcNAc...) asparagine glycosylation sites follow: N661, N835, N881, N929, and N957.

It belongs to the glycosyl hydrolase 31 family.

It carries out the reaction Hydrolysis of terminal, non-reducing (1-&gt;4)-linked alpha-D-glucose residues with release of alpha-D-glucose.. Its function is as follows. Hydrolyzes malto-oligosaccharides, but has a low activity toward soluble starch. The protein is Alpha-glucosidase (agdA) of Aspergillus oryzae (strain ATCC 42149 / RIB 40) (Yellow koji mold).